A 227-amino-acid polypeptide reads, in one-letter code: 2-C-methyl-D-erythritol 4-phosphate cytidylyltransferase (227 aa).

This sequence belongs to the IspD/TarI cytidylyltransferase family. IspD subfamily.

The catalysed reaction is 2-C-methyl-D-erythritol 4-phosphate + CTP + H(+) = 4-CDP-2-C-methyl-D-erythritol + diphosphate. It participates in isoprenoid biosynthesis; isopentenyl diphosphate biosynthesis via DXP pathway; isopentenyl diphosphate from 1-deoxy-D-xylulose 5-phosphate: step 2/6. Its function is as follows. Catalyzes the formation of 4-diphosphocytidyl-2-C-methyl-D-erythritol from CTP and 2-C-methyl-D-erythritol 4-phosphate (MEP). This chain is 2-C-methyl-D-erythritol 4-phosphate cytidylyltransferase, found in Bordetella bronchiseptica (strain ATCC BAA-588 / NCTC 13252 / RB50) (Alcaligenes bronchisepticus).